We begin with the raw amino-acid sequence, 284 residues long: Tropomyosin (284 aa).

A disordered region spans residues 1–41 (MDAIKKKMQAMKLEKDNAVDRAETAEQQSRDAALRAEKAEE). A coiled-coil region spans residues 1-284 (MDAIKKKMQA…DQTFSELTGY (284 aa)). Over residues 12-41 (KLEKDNAVDRAETAEQQSRDAALRAEKAEE) the composition is skewed to basic and acidic residues.

It belongs to the tropomyosin family. Homodimer.

Functionally, tropomyosin, in association with the troponin complex, plays a central role in the calcium dependent regulation of muscle contraction. In Haemaphysalis longicornis (Bush tick), this protein is Tropomyosin.